A 76-amino-acid chain; its full sequence is U10-ctenitoxin-Pn1a (76 aa).

Residues 1–15 form the signal peptide; it reads SFVFYLFTLITVVRA. Positions 16 to 36 are excised as a propeptide; the sequence is EEFILENEAEDIAPAVHGESG. 4 disulfide bridges follow: C39–C54, C46–C59, C53–C73, and C61–C71.

Belongs to the neurotoxin 02 (plectoxin) family. 09 subfamily. Expressed by the venom gland.

It is found in the secreted. The protein is U10-ctenitoxin-Pn1a of Phoneutria nigriventer (Brazilian armed spider).